The chain runs to 343 residues: N-acetyl-gamma-glutamyl-phosphate reductase (343 aa).

Cys-146 is a catalytic residue.

This sequence belongs to the NAGSA dehydrogenase family. Type 1 subfamily.

It localises to the cytoplasm. The enzyme catalyses N-acetyl-L-glutamate 5-semialdehyde + phosphate + NADP(+) = N-acetyl-L-glutamyl 5-phosphate + NADPH + H(+). It functions in the pathway amino-acid biosynthesis; L-arginine biosynthesis; N(2)-acetyl-L-ornithine from L-glutamate: step 3/4. Catalyzes the NADPH-dependent reduction of N-acetyl-5-glutamyl phosphate to yield N-acetyl-L-glutamate 5-semialdehyde. The polypeptide is N-acetyl-gamma-glutamyl-phosphate reductase (Pseudarthrobacter chlorophenolicus (strain ATCC 700700 / DSM 12829 / CIP 107037 / JCM 12360 / KCTC 9906 / NCIMB 13794 / A6) (Arthrobacter chlorophenolicus)).